The following is a 294-amino-acid chain: 4-hydroxy-tetrahydrodipicolinate synthase (294 aa).

Thr44 is a pyruvate binding site. Tyr132 acts as the Proton donor/acceptor in catalysis. The Schiff-base intermediate with substrate role is filled by Lys161. Residue Ile206 participates in pyruvate binding.

This sequence belongs to the DapA family. In terms of assembly, homotetramer; dimer of dimers.

The protein localises to the cytoplasm. It catalyses the reaction L-aspartate 4-semialdehyde + pyruvate = (2S,4S)-4-hydroxy-2,3,4,5-tetrahydrodipicolinate + H2O + H(+). It participates in amino-acid biosynthesis; L-lysine biosynthesis via DAP pathway; (S)-tetrahydrodipicolinate from L-aspartate: step 3/4. Its function is as follows. Catalyzes the condensation of (S)-aspartate-beta-semialdehyde [(S)-ASA] and pyruvate to 4-hydroxy-tetrahydrodipicolinate (HTPA). The protein is 4-hydroxy-tetrahydrodipicolinate synthase of Thermotoga petrophila (strain ATCC BAA-488 / DSM 13995 / JCM 10881 / RKU-1).